Consider the following 160-residue polypeptide: Protein max (160 aa).

Residues 1-13 (MSDNDDIEVESDE) show a composition bias toward acidic residues. Positions 1 to 40 (MSDNDDIEVESDEEQPRFQSAADKRAHHNALERKRRDHIK) are disordered. S2 bears the N-acetylserine mark. Residues S2 and S11 each carry the phosphoserine modification. Positions 23–74 (DKRAHHNALERKRRDHIKDSFHSLRDSVPSLQGEKASRAQILDKATEYIQYM) constitute a bHLH domain. Residues 29-40 (NALERKRRDHIK) are compositionally biased toward basic and acidic residues. An N6-acetyllysine modification is found at K66. Positions 81–102 (HQQDIDDLKRQNALLEQQVRAL) are leucine-zipper. The segment at 105 to 160 (ARSSAQLQTNYPSSDNSLYTNAKGGTISAFDGGSDSSSESEPEEPQNRKKLRMEAS) is disordered. Position 107 is a phosphoserine (S107). A compositionally biased stretch (polar residues) spans 107–124 (SSAQLQTNYPSSDNSLYT). 2 positions are modified to N6-acetyllysine: K153 and K154.

Belongs to the MAX family. Efficient DNA binding requires dimerization with another bHLH protein. Binds DNA as a heterodimer with MYC or MAD. Part of the E2F6.com-1 complex in G0 phase composed of E2F6, MGA, MAX, TFDP1, CBX3, BAT8, EUHMTASE1, RING1, RNF2, MBLR, L3MBTL2 and YAF2. Component of some MLL1/MLL complex, at least composed of the core components KMT2A/MLL1, ASH2L, HCFC1/HCF1, WDR5 and RBBP5, as well as the facultative components BACC1, CHD8, E2F6, HSP70, INO80C, KANSL1, LAS1L, MAX, MCRS1, MGA, MYST1/MOF, PELP1, PHF20, PRP31, RING2, RUVB1/TIP49A, RUVB2/TIP49B, SENP3, TAF1, TAF4, TAF6, TAF7, TAF9 and TEX10. Interacts with SPAG9. The heterodimer MYC:MAX interacts with ABI1; the interaction may enhance MYC:MAX transcriptional activity. In terms of processing, phosphorylated.

Its subcellular location is the nucleus. The protein resides in the cell projection. It localises to the dendrite. In terms of biological role, transcription regulator. Forms a sequence-specific DNA-binding protein complex with MYC or MAD which recognizes the core sequence 5'-CAC[GA]TG-3'. The MYC:MAX complex is a transcriptional activator, whereas the MAD:MAX complex is a repressor. May repress transcription via the recruitment of a chromatin remodeling complex containing H3 'Lys-9' histone methyltransferase activity. Represses MYC transcriptional activity from E-box elements. This chain is Protein max, found in Rattus norvegicus (Rat).